The sequence spans 505 residues: Bifunctional pantoate ligase/cytidylate kinase (505 aa).

The pantoate--beta-alanine ligase stretch occupies residues 1–268 (MHQWRKHQQS…CGETRLIDHT (268 aa)). Position 18–25 (18–25 (MGALHRGH)) interacts with ATP. Histidine 25 functions as the Proton donor in the catalytic mechanism. Glutamine 53 serves as a coordination point for (R)-pantoate. A beta-alanine-binding site is contributed by glutamine 53. 142-145 (GEKD) contacts ATP. Glutamine 148 lines the (R)-pantoate pocket. ATP is bound by residues valine 171 and 179-182 (CSSR). The cytidylate kinase stretch occupies residues 269–505 (FLMSRQPIVA…PEEVWPTAGR (237 aa)).

In the N-terminal section; belongs to the pantothenate synthetase family. This sequence in the C-terminal section; belongs to the cytidylate kinase family. Type 1 subfamily.

The protein localises to the cytoplasm. It carries out the reaction (R)-pantoate + beta-alanine + ATP = (R)-pantothenate + AMP + diphosphate + H(+). The enzyme catalyses CMP + ATP = CDP + ADP. It catalyses the reaction dCMP + ATP = dCDP + ADP. Its pathway is cofactor biosynthesis; (R)-pantothenate biosynthesis; (R)-pantothenate from (R)-pantoate and beta-alanine: step 1/1. In terms of biological role, catalyzes the condensation of pantoate with beta-alanine in an ATP-dependent reaction via a pantoyl-adenylate intermediate. Functionally, catalyzes the transfer of a phosphate group from ATP to either CMP or dCMP to form CDP or dCDP and ADP, respectively. In Prochlorococcus marinus (strain MIT 9313), this protein is Bifunctional pantoate ligase/cytidylate kinase.